The chain runs to 1205 residues: Plasma membrane calcium-transporting ATPase 4 (1205 aa).

Residues M1–A100 are Cytoplasmic-facing. A helical transmembrane segment spans residues L101–F121. Residues Y122–T147 are Extracellular-facing. A helical membrane pass occupies residues G148–F168. Residues N169–L369 are Cytoplasmic-facing. The interval D294–D318 is disordered. Phosphoserine occurs at positions 329 and 335. A helical transmembrane segment spans residues I370 to I390. Over Q391–K409 the chain is Extracellular. The helical transmembrane segment at F410–V430 threads the bilayer. Topologically, residues T431–F844 are cytoplasmic. D466 (4-aspartylphosphate intermediate) is an active-site residue. Mg(2+)-binding residues include D786 and D790. A helical transmembrane segment spans residues L845–I865. Residues T866–K872 are Extracellular-facing. Residues A873 to T893 form a helical membrane-spanning segment. Over E894–K919 the chain is Cytoplasmic. Residues N920–L942 form a helical membrane-spanning segment. The Extracellular segment spans residues F943–P956. A helical transmembrane segment spans residues P957 to A979. The Cytoplasmic portion of the chain corresponds to R980–N995. The helical transmembrane segment at I996 to G1016 threads the bilayer. The Extracellular portion of the chain corresponds to G1017 to Q1029. The helical transmembrane segment at W1030–I1050 threads the bilayer. The Cytoplasmic portion of the chain corresponds to P1051 to V1205. Phosphoserine is present on residues S1065 and S1071. R1072 is subject to Omega-N-methylarginine. Residues L1087–Q1104 form a calmodulin-binding subdomain A region. Residue T1103 is modified to Phosphothreonine; by PKC. The segment at I1105 to N1114 is calmodulin-binding subdomain B. S1145 carries the post-translational modification Phosphoserine.

The protein belongs to the cation transport ATPase (P-type) (TC 3.A.3) family. Type IIB subfamily. Interacts with PDZD11. Interacts with SLC35G1 and STIM1. Interacts with calmodulin. In terms of tissue distribution, specifically expressed by sperm in testis (at protein level).

The protein localises to the membrane. The protein resides in the cell projection. It localises to the cilium. It is found in the flagellum membrane. The catalysed reaction is Ca(2+)(in) + ATP + H2O = Ca(2+)(out) + ADP + phosphate + H(+). Activated by calcium/calmodulin. Calcium/calmodulin-regulated and magnesium-dependent enzyme that catalyzes the hydrolysis of ATP coupled with the transport of calcium out of the cell. By regulating sperm cell calcium homeostasis, may play a role in sperm motility. This is Plasma membrane calcium-transporting ATPase 4 from Mus musculus (Mouse).